The following is a 284-amino-acid chain: L-ribulose-5-phosphate 3-epimerase UlaE (284 aa).

The protein belongs to the L-ribulose-5-phosphate 3-epimerase family.

It carries out the reaction L-ribulose 5-phosphate = L-xylulose 5-phosphate. It functions in the pathway cofactor degradation; L-ascorbate degradation; D-xylulose 5-phosphate from L-ascorbate: step 3/4. Its function is as follows. Catalyzes the isomerization of L-xylulose-5-phosphate to L-ribulose-5-phosphate. Is involved in the anaerobic L-ascorbate utilization. The polypeptide is L-ribulose-5-phosphate 3-epimerase UlaE (Escherichia coli (strain ATCC 8739 / DSM 1576 / NBRC 3972 / NCIMB 8545 / WDCM 00012 / Crooks)).